Here is a 955-residue protein sequence, read N- to C-terminus: Anoctamin-4 (955 aa).

Over 1–352 (MEASSSGITN…FGEKIGLYFA (352 aa)) the chain is Cytoplasmic. Residues 73–97 (KDDDSLLHPGNLTSTSEDTSRLEAG) are disordered. The chain crosses the membrane as a helical span at residues 353–373 (WLGWYTGMLFPAAFIGLFVFL). Over 374–424 (YGVTTLDHCQVSKEVCQATDIIMCPVCDKYCPFMRLSDSCVYAKVTHLFDN) the chain is Extracellular. The helical transmembrane segment at 425–445 (GATVFFAVFMAVWATVFLEFW) threads the bilayer. At 446 to 505 (KRRRAVIAYDWDLIDWEEEEEEIRPQFEAKYSKKERMNPISGKPEPYQAFTDKCSRLIVS) the chain is on the cytoplasmic side. The chain crosses the membrane as a helical span at residues 506 to 526 (ASGIFFMICVVIAAVFGIVIY). The Extracellular segment spans residues 527-547 (RVVTVSTFAAFKWALIRNNSQ). A glycan (N-linked (GlcNAc...) asparagine) is linked at N544. Residues 548–568 (VATTGTAVCINFCIIMLLNVL) traverse the membrane as a helical segment. The Cytoplasmic segment spans residues 569-595 (YEKVALLLTNLEQPRTESEWENSFTLK). A helical transmembrane segment spans residues 596–616 (MFLFQFVNLNSSTFYIAFFLG). The Extracellular segment spans residues 617–715 (RFTGHPGAYL…AYGLFDEYLE (99 aa)). The chain crosses the membrane as a helical span at residues 716-736 (MILQFGFTTIFVAAFPLAPLL). Topologically, residues 737–768 (ALLNNIIEIRLDAYKFVTQWRRPLASRAKDIG) are cytoplasmic. The chain crosses the membrane as a helical span at residues 769-789 (IWYGILEGIGILSVITNAFVI). Over 790–885 (AITSDFIPRL…QFWHVLAARL (96 aa)) the chain is Extracellular. N-linked (GlcNAc...) asparagine glycans are attached at residues N824 and N837. Residues 886–906 (AFIIVFEHLVFCIKHLISYLI) form a helical membrane-spanning segment. Residues 907-955 (PDLPKDLRDRMRREKYLIQEMMYEAELERLQKERKERKKNGKAHHNEWP) are Cytoplasmic-facing.

It belongs to the anoctamin family. In terms of tissue distribution, predominantly expressed in neuronal tissues. Expressed at low levels in ovary, uterus, heart and brain.

Its subcellular location is the cell membrane. It carries out the reaction a 1,2-diacyl-sn-glycero-3-phospho-L-serine(in) = a 1,2-diacyl-sn-glycero-3-phospho-L-serine(out). It catalyses the reaction a beta-D-galactosyl-(1&lt;-&gt;1')-N-acylsphing-4-enine(out) = a beta-D-galactosyl-(1&lt;-&gt;1')-N-acylsphing-4-enine(in). The enzyme catalyses a 1,2-diacyl-sn-glycero-3-phosphocholine(in) = a 1,2-diacyl-sn-glycero-3-phosphocholine(out). Its function is as follows. Has calcium-dependent phospholipid scramblase activity; scrambles phosphatidylserine, phosphatidylcholine and galactosylceramide. Does not exhibit calcium-activated chloride channel (CaCC) activity. In Mus musculus (Mouse), this protein is Anoctamin-4.